The primary structure comprises 204 residues: 3,4-dihydroxy-2-butanone 4-phosphate synthase (204 aa).

Glu-27 serves as a coordination point for Mg(2+). Asp-31 provides a ligand contact to D-ribulose 5-phosphate. Cys-56 carries the S-glutathionyl cysteine modification. Residues Thr-82 and 140–144 (RDGHT) contribute to the D-ribulose 5-phosphate site. Position 143 (His-143) interacts with Mg(2+).

It belongs to the DHBP synthase family. Homodimer. Mg(2+) is required as a cofactor. The cofactor is Mn(2+). S-glutathionylation is reversible and dependent on a glutaredoxin.

It carries out the reaction D-ribulose 5-phosphate = (2S)-2-hydroxy-3-oxobutyl phosphate + formate + H(+). Its pathway is cofactor biosynthesis; riboflavin biosynthesis; 2-hydroxy-3-oxobutyl phosphate from D-ribulose 5-phosphate: step 1/1. Its function is as follows. Catalyzes the conversion of D-ribulose 5-phosphate to formate and 3,4-dihydroxy-2-butanone 4-phosphate. This is 3,4-dihydroxy-2-butanone 4-phosphate synthase from Schizosaccharomyces pombe (strain 972 / ATCC 24843) (Fission yeast).